The following is a 131-amino-acid chain: Ribosome-binding factor A (131 aa).

This sequence belongs to the RbfA family. In terms of assembly, monomer. Binds 30S ribosomal subunits, but not 50S ribosomal subunits or 70S ribosomes.

The protein resides in the cytoplasm. In terms of biological role, one of several proteins that assist in the late maturation steps of the functional core of the 30S ribosomal subunit. Associates with free 30S ribosomal subunits (but not with 30S subunits that are part of 70S ribosomes or polysomes). Required for efficient processing of 16S rRNA. May interact with the 5'-terminal helix region of 16S rRNA. The chain is Ribosome-binding factor A from Vibrio vulnificus (strain CMCP6).